Consider the following 126-residue polypeptide: Histone H2B type 1-B (126 aa).

The span at 1–12 (MPEPSKSAPAPK) shows a compositional bias: low complexity. The interval 1–35 (MPEPSKSAPAPKKGSKKAITKAQKKDGKKRKRSRK) is disordered. P2 carries the post-translational modification N-acetylproline. E3 is modified (ADP-ribosyl glutamic acid). At K6 the chain carries N6-(2-hydroxyisobutyryl)lysine; alternate. K6 is modified (N6-(beta-hydroxybutyryl)lysine; alternate). N6-acetyllysine; alternate is present on K6. The residue at position 6 (K6) is an N6-butyryllysine; alternate. N6-crotonyllysine; alternate is present on K6. N6-lactoyllysine; alternate is present on K6. K6 participates in a covalent cross-link: Glycyl lysine isopeptide (Lys-Gly) (interchain with G-Cter in SUMO2); alternate. S7 is modified (ADP-ribosylserine). K12 is subject to N6-(beta-hydroxybutyryl)lysine; alternate. N6-acetyllysine; alternate is present on residues K12 and K13. K12 and K13 each carry N6-crotonyllysine; alternate. K12 is modified (N6-lactoyllysine; alternate). K13 is modified (N6-(2-hydroxyisobutyryl)lysine; alternate). Residue S15 is modified to Phosphoserine; by STK4/MST1. Residues K16, K17, K21, and K24 each carry the N6-acetyllysine; alternate modification. 4 positions are modified to N6-crotonyllysine; alternate: K16, K17, K21, and K24. N6-lactoyllysine; alternate is present on residues K16, K17, K21, and K24. An N6-(beta-hydroxybutyryl)lysine; alternate mark is found at K17 and K21. K17 carries the N6-glutaryllysine; alternate modification. K21 and K24 each carry N6-(2-hydroxyisobutyryl)lysine; alternate. An N6-butyryllysine; alternate modification is found at K21. Residue K21 forms a Glycyl lysine isopeptide (Lys-Gly) (interchain with G-Cter in SUMO2); alternate linkage. The residue at position 25 (K25) is an N6-(2-hydroxyisobutyryl)lysine. K35 carries the post-translational modification N6-(2-hydroxyisobutyryl)lysine; alternate. K35 carries the N6-(beta-hydroxybutyryl)lysine; alternate modification. K35 bears the N6-crotonyllysine; alternate mark. K35 carries the N6-glutaryllysine; alternate modification. K35 is modified (N6-succinyllysine; alternate). A Glycyl lysine isopeptide (Lys-Gly) (interchain with G-Cter in ubiquitin); alternate cross-link involves residue K35. E36 carries the post-translational modification PolyADP-ribosyl glutamic acid. Position 37 is a phosphoserine; by AMPK (S37). N6-(2-hydroxyisobutyryl)lysine; alternate occurs at positions 44, 47, and 58. K44 carries the N6-lactoyllysine; alternate modification. N6-glutaryllysine; alternate occurs at positions 44 and 47. K47 carries the post-translational modification N6-methyllysine; alternate. K58 bears the N6,N6-dimethyllysine; alternate mark. R80 carries the post-translational modification Dimethylated arginine. At K86 the chain carries N6-(2-hydroxyisobutyryl)lysine; alternate. N6-(beta-hydroxybutyryl)lysine; alternate is present on K86. K86 carries the N6-acetyllysine; alternate modification. Residue K86 is modified to N6-lactoyllysine; alternate. Residue K86 is modified to N6,N6,N6-trimethyllysine; alternate. Omega-N-methylarginine occurs at positions 87 and 93. N6-(2-hydroxyisobutyryl)lysine; alternate is present on K109. Residue K109 is modified to N6-lactoyllysine; alternate. The residue at position 109 (K109) is an N6-glutaryllysine; alternate. At K109 the chain carries N6-methyllysine; alternate. The O-linked (GlcNAc) serine glycan is linked to S113. T116 carries the phosphothreonine modification. N6-(2-hydroxyisobutyryl)lysine; alternate occurs at positions 117 and 121. K117 and K121 each carry N6-(beta-hydroxybutyryl)lysine; alternate. 2 positions are modified to N6-lactoyllysine; alternate: K117 and K121. N6-glutaryllysine; alternate is present on residues K117 and K121. Residues K117 and K121 each carry the N6-succinyllysine; alternate modification. Residue K117 is modified to N6-malonyllysine; alternate. An N6-methylated lysine; alternate modification is found at K117. Residue K121 forms a Glycyl lysine isopeptide (Lys-Gly) (interchain with G-Cter in ubiquitin); alternate linkage.

This sequence belongs to the histone H2B family. The nucleosome is a histone octamer containing two molecules each of H2A, H2B, H3 and H4 assembled in one H3-H4 heterotetramer and two H2A-H2B heterodimers. The octamer wraps approximately 147 bp of DNA. Monoubiquitination at Lys-35 (H2BK34Ub) by the MSL1/MSL2 dimer is required for histone H3 'Lys-4' (H3K4me) and 'Lys-79' (H3K79me) methylation and transcription activation at specific gene loci, such as HOXA9 and MEIS1 loci. Similarly, monoubiquitination at Lys-121 (H2BK120Ub) by the RNF20/40 complex gives a specific tag for epigenetic transcriptional activation and is also prerequisite for histone H3 'Lys-4' and 'Lys-79' methylation. It also functions cooperatively with the FACT dimer to stimulate elongation by RNA polymerase II. H2BK120Ub also acts as a regulator of mRNA splicing: deubiquitination by USP49 is required for efficient cotranscriptional splicing of a large set of exons. In terms of processing, phosphorylation at Ser-37 (H2BS36ph) by AMPK in response to stress promotes transcription. Phosphorylated on Ser-15 (H2BS14ph) by STK4/MST1 during apoptosis; which facilitates apoptotic chromatin condensation. Also phosphorylated on Ser-15 in response to DNA double strand breaks (DSBs), and in correlation with somatic hypermutation and immunoglobulin class-switch recombination. Post-translationally, glcNAcylation at Ser-113 promotes monoubiquitination of Lys-121. It fluctuates in response to extracellular glucose, and associates with transcribed genes. ADP-ribosylated by PARP1 or PARP2 on Ser-7 (H2BS6ADPr) in response to DNA damage. H2BS6ADPr promotes recruitment of CHD1L. Mono-ADP-ribosylated on Glu-3 (H2BE2ADPr) by PARP3 in response to single-strand breaks. Poly ADP-ribosylation on Glu-36 (H2BE35ADPr) by PARP1 regulates adipogenesis: it inhibits phosphorylation at Ser-37 (H2BS36ph), thereby blocking expression of pro-adipogenetic genes. In terms of processing, crotonylation (Kcr) is specifically present in male germ cells and marks testis-specific genes in post-meiotic cells, including X-linked genes that escape sex chromosome inactivation in haploid cells. Crotonylation marks active promoters and enhancers and confers resistance to transcriptional repressors. It is also associated with post-meiotically activated genes on autosomes. Post-translationally, lactylated in macrophages by EP300/P300 by using lactoyl-CoA directly derived from endogenous or exogenous lactate, leading to stimulates gene transcription.

The protein resides in the nucleus. It localises to the chromosome. Core component of nucleosome. Nucleosomes wrap and compact DNA into chromatin, limiting DNA accessibility to the cellular machineries which require DNA as a template. Histones thereby play a central role in transcription regulation, DNA repair, DNA replication and chromosomal stability. DNA accessibility is regulated via a complex set of post-translational modifications of histones, also called histone code, and nucleosome remodeling. This is Histone H2B type 1-B from Homo sapiens (Human).